Reading from the N-terminus, the 1019-residue chain is TOG array regulator of axonemal microtubules protein 2 (1019 aa).

Disordered regions lie at residues 28-54 (AGPR…PEPR), 131-158 (RRLS…PLHS), 249-311 (TPSR…AKKP), and 991-1019 (SLGG…FQLD). The segment covering 1007-1019 (SKTTGSSYPFQLD) has biased composition (polar residues).

The protein belongs to the Crescerin family.

The sequence is that of TOG array regulator of axonemal microtubules protein 2 from Homo sapiens (Human).